Reading from the N-terminus, the 476-residue chain is Cysteine--tRNA ligase (476 aa).

A Zn(2+)-binding site is contributed by C29. Residues 31–41 (PTVYDYPHLGH) carry the 'HIGH' region motif. The Zn(2+) site is built by C209, H234, and E238. The short motif at 266 to 270 (KMSKS) is the 'KMSKS' region element. K269 provides a ligand contact to ATP.

The protein belongs to the class-I aminoacyl-tRNA synthetase family. Zn(2+) serves as cofactor.

It localises to the cytoplasm. It catalyses the reaction tRNA(Cys) + L-cysteine + ATP = L-cysteinyl-tRNA(Cys) + AMP + diphosphate. The polypeptide is Cysteine--tRNA ligase (cysS) (Pyrococcus horikoshii (strain ATCC 700860 / DSM 12428 / JCM 9974 / NBRC 100139 / OT-3)).